Here is a 514-residue protein sequence, read N- to C-terminus: MDVIKKKHWWQSDALKWSVLGLLGLLVGYLVVLMYAQGEYLFAITTLILSSAGLYIFANRKAYAWRYVYPGMAGMGLFVLFPLVCTIAIAFTNYSSTNQLTFERAQEVLLDRSWQAGKTYNFGLYPAGDEWQLALSDGETGKNYLSDAFKFGGEQKLQLKETTAQPEGERANLRVITQNRQALSDITAILPDGNKVMMSSLRQFSGTQPLYTLDGDGTLTNNQSGVKYRPNNQIGFYQSITADGNWGDEKLSPGYTVTTGWKNFTRVFTDEGIQKPFLAIFVWTVVFSLITVFLTVAVGMVLACLVQWEALRGKAVYRVLLILPYAVPSFISILIFKGLFNQSFGEINMMLSALFGVKPAWFSDPTTARTMLIIVNTWLGYPYMMILCMGLLKAIPDDLYEASAMDGAGPFQNFFKITLPLLIKPLTPLMIASFAFNFNNFVLIQLLTNGGPDRLGTTTPAGYTDLLVNYTYRIAFEGGGGQDFGLAAAIATLIFLLVGALAIVNLKATRMKFD.

The Cytoplasmic segment spans residues 1 to 16 (MDVIKKKHWWQSDALK). Residues 17-36 (WSVLGLLGLLVGYLVVLMYA) form a helical membrane-spanning segment. At 37 to 39 (QGE) the chain is on the periplasmic side. The chain crosses the membrane as a helical span at residues 40–58 (YLFAITTLILSSAGLYIFA). At 59–66 (NRKAYAWR) the chain is on the cytoplasmic side. Residues 67–92 (YVYPGMAGMGLFVLFPLVCTIAIAFT) form a helical membrane-spanning segment. The Periplasmic portion of the chain corresponds to 93–275 (NYSSTNQLTF…RVFTDEGIQK (183 aa)). Residues 276–306 (PFLAIFVWTVVFSLITVFLTVAVGMVLACLV) traverse the membrane as a helical segment. The ABC transmembrane type-1 domain occupies 281–505 (FVWTVVFSLI…LLVGALAIVN (225 aa)). Topologically, residues 307-318 (QWEALRGKAVYR) are cytoplasmic. The chain crosses the membrane as a helical span at residues 319-336 (VLLILPYAVPSFISILIF). Residues 337–369 (KGLFNQSFGEINMMLSALFGVKPAWFSDPTTAR) lie on the Periplasmic side of the membrane. The chain crosses the membrane as a helical span at residues 370 to 392 (TMLIIVNTWLGYPYMMILCMGLL). The Cytoplasmic portion of the chain corresponds to 393–425 (KAIPDDLYEASAMDGAGPFQNFFKITLPLLIKP). The helical transmembrane segment at 426 to 452 (LTPLMIASFAFNFNNFVLIQLLTNGGP) threads the bilayer. The Periplasmic portion of the chain corresponds to 453–483 (DRLGTTTPAGYTDLLVNYTYRIAFEGGGGQD). A helical membrane pass occupies residues 484 to 505 (FGLAAAIATLIFLLVGALAIVN). Residues 506–514 (LKATRMKFD) lie on the Cytoplasmic side of the membrane.

This sequence belongs to the binding-protein-dependent transport system permease family. MalFG subfamily. In terms of assembly, the complex is composed of two ATP-binding proteins (MalK), two transmembrane proteins (MalG and MalF) and a solute-binding protein (MalE). Protein stability and stable complex formation require YidC.

The protein resides in the cell inner membrane. Its function is as follows. Part of the ABC transporter complex MalEFGK involved in maltose/maltodextrin import. Probably responsible for the translocation of the substrate across the membrane. The chain is Maltose/maltodextrin transport system permease protein MalF from Escherichia coli (strain K12).